Reading from the N-terminus, the 516-residue chain is MSKTESRKLSDDYEVVDVLGRGGFSIVRRGVSKSEEKTQVAIKTLRRLGPAMAGMKQGTKPVPGSGLPMWKQVSISDALLTNEILVMRRIVESVAPHPNVINLHDVYEDVHGVHLVLELCSGGELFDRIVGRDRYSEFDAACVIRQIASGLEALHKASIVHRDLKPENCLFSDKDEKSTLKIMDFGLSSVEDFSDPIVALFGSIDYVSPEALSRQEVSAASDMWSVGVILYILLSGCPPFHAATNREKQQRILQGEFSFQDHTWKTISSSAKDLISRLLSVQPYKRPTASDLLRHPWVIGDCAKQDLMDAEVVSKLQKFNARRKLRAAAIASVLSCKVALRTKRLRNLLGTHDLTSEELDNLRLHFGRICADGENATLSEFEQVLRAMKMDSLIPLAPRVFDLFDNNRDGTVDMREILCGFSSLRNSRGDDALRLCFQMYDADRSGCISKEELASMLRALPEECLPGDITEPGKLDEVFDQMDADSDGKVTFDEFKAAMNKDSALQDVLLSSLRPQ.

The Protein kinase domain maps to 13–298 (YEVVDVLGRG…ASDLLRHPWV (286 aa)). ATP-binding positions include 19–27 (LGRGGFSIV) and K43. The active-site Proton acceptor is the D163. T263 bears the Phosphothreonine mark. Residues 321–334 (ARRKLRAAAIASVL) form a calmodulin-binding region. Positions 343 to 363 (KRLRNLLGTHDLTSEELDNLR) form a coiled coil. 3 EF-hand domains span residues 392–427 (SLIPLAPRVFDLFDNNRDGTVDMREILCGFSSLRNS), 428–463 (RGDDALRLCFQMYDADRSGCISKEELASMLRALPEE), and 470–505 (TEPGKLDEVFDQMDADSDGKVTFDEFKAAMNKDSAL). Positions 405, 407, 409, 411, 416, 441, 443, 445, 447, 452, 483, 485, 487, 489, and 494 each coordinate Ca(2+).

The protein belongs to the protein kinase superfamily. CAMK Ser/Thr protein kinase family. CaMK subfamily. Post-translationally, autophosphorylation. Mainly expressed in roots and panicles. Detected in leaves, shoots and culms.

The protein resides in the nucleus. It localises to the cytoplasm. It is found in the cell membrane. The catalysed reaction is L-seryl-[protein] + ATP = O-phospho-L-seryl-[protein] + ADP + H(+). It carries out the reaction L-threonyl-[protein] + ATP = O-phospho-L-threonyl-[protein] + ADP + H(+). Its function is as follows. Calcium- and calmodulin-dependent protein kinase required for arbuscular mycorrhizal (AM) symbiosis. Involved in response to water deprivation stress. Required for abscisic acid-induced antioxidant defense and oxidative stress tolerance during dehydration stress. Functions upstream of MPK1 in an abscisic acid signaling pathway that regulates the activities of antioxidant enzymes and the production of hydrogen peroxide. This is Calcium and calcium/calmodulin-dependent serine/threonine-protein kinase (CCAMK) from Oryza sativa subsp. japonica (Rice).